The following is a 382-amino-acid chain: Cytoplasmic tRNA 2-thiolation protein 2 (382 aa).

It belongs to the CTU2/NCS2 family.

The protein resides in the cytoplasm. The protein operates within tRNA modification; 5-methoxycarbonylmethyl-2-thiouridine-tRNA biosynthesis. Functionally, plays a central role in 2-thiolation of mcm(5)S(2)U at tRNA wobble positions of tRNA(Lys), tRNA(Glu) and tRNA(Gln). May act by forming a heterodimer with NCS6 that ligates sulfur from thiocarboxylated URM1 onto the uridine of tRNAs at wobble position. Prior mcm(5) tRNA modification by the elongator complex is required for 2-thiolation. May also be involved in protein urmylation. This Phaeosphaeria nodorum (strain SN15 / ATCC MYA-4574 / FGSC 10173) (Glume blotch fungus) protein is Cytoplasmic tRNA 2-thiolation protein 2.